Consider the following 141-residue polypeptide: Large ribosomal subunit protein uL22 (141 aa).

The segment at 110–141 (EEKKTVAKKTTTTKAPAKKTTSTKKATVKKES) is disordered. Low complexity predominate over residues 117-134 (KKTTTTKAPAKKTTSTKK).

The protein belongs to the universal ribosomal protein uL22 family. In terms of assembly, part of the 50S ribosomal subunit.

This protein binds specifically to 23S rRNA; its binding is stimulated by other ribosomal proteins, e.g. L4, L17, and L20. It is important during the early stages of 50S assembly. It makes multiple contacts with different domains of the 23S rRNA in the assembled 50S subunit and ribosome. Its function is as follows. The globular domain of the protein is located near the polypeptide exit tunnel on the outside of the subunit, while an extended beta-hairpin is found that lines the wall of the exit tunnel in the center of the 70S ribosome. The sequence is that of Large ribosomal subunit protein uL22 from Campylobacter jejuni (strain RM1221).